The following is a 294-amino-acid chain: Ribosomal RNA small subunit methyltransferase H (294 aa).

S-adenosyl-L-methionine-binding positions include 36-38 (GGH), Asp55, Phe82, Asp97, and Gln104. The segment at 265 to 285 (KPTVATDDEQNRNPRSRSAKW) is disordered.

The protein belongs to the methyltransferase superfamily. RsmH family.

The protein resides in the cytoplasm. The catalysed reaction is cytidine(1402) in 16S rRNA + S-adenosyl-L-methionine = N(4)-methylcytidine(1402) in 16S rRNA + S-adenosyl-L-homocysteine + H(+). Functionally, specifically methylates the N4 position of cytidine in position 1402 (C1402) of 16S rRNA. This chain is Ribosomal RNA small subunit methyltransferase H, found in Synechococcus sp. (strain CC9902).